Reading from the N-terminus, the 503-residue chain is Putative acyl--CoA ligase YdaB (503 aa).

Belongs to the ATP-dependent AMP-binding enzyme family.

This chain is Putative acyl--CoA ligase YdaB (ydaB), found in Bacillus subtilis (strain 168).